The chain runs to 360 residues: MLLIIDLQTAFINWFVGLGVSKDISAALWIPLPILVVIVGATIGVLVIVWLERKISAGVQQRIGPEFAGPLGVLQPLADGLKLVFKEDIIPSKADIWLFTLGPALVVIPVFLAYLVVPFGHDLVVADISLGVFFWIAISSIAPIGLLMSGYGSNNKYSFLGGLRAAAQAISYEIPLSLCVLAICLLSNSLSTVEIVEQQSAYGILGWNVWRQPIGFVSFLIAALAECERLPFDLPEAEEELVAGYQTEYSGMKFGLFYVGSYVNLLLSSLFATILYLGGWTSPITFSIPFQTSEIEIFAAFLGIGMTLLKAYLFIFLSILTRWTLPRVRIDQLLDLGWKFLLPISLGNLLLTASLRLAFY.

Transmembrane regions (helical) follow at residues 29–49, 96–116, 128–148, 166–186, 204–224, 255–277, 297–317, and 333–353; these read WIPL…LVIV, IWLF…AYLV, ISLG…GLLM, AAQA…ICLL, ILGW…IAAL, GLFY…ILYL, IFAA…FIFL, and LLDL…LLTA.

The protein belongs to the complex I subunit 1 family. In terms of assembly, NDH is composed of at least 16 different subunits, 5 of which are encoded in the nucleus.

It localises to the plastid. The protein localises to the chloroplast thylakoid membrane. It carries out the reaction a plastoquinone + NADH + (n+1) H(+)(in) = a plastoquinol + NAD(+) + n H(+)(out). The catalysed reaction is a plastoquinone + NADPH + (n+1) H(+)(in) = a plastoquinol + NADP(+) + n H(+)(out). NDH shuttles electrons from NAD(P)H:plastoquinone, via FMN and iron-sulfur (Fe-S) centers, to quinones in the photosynthetic chain and possibly in a chloroplast respiratory chain. The immediate electron acceptor for the enzyme in this species is believed to be plastoquinone. Couples the redox reaction to proton translocation, and thus conserves the redox energy in a proton gradient. This is NAD(P)H-quinone oxidoreductase subunit 1, chloroplastic from Chlorokybus atmophyticus (Soil alga).